The chain runs to 920 residues: Translation initiation factor IF-2 (920 aa).

Positions lysine 33 to arginine 305 are disordered. The segment covering serine 53–proline 86 has biased composition (low complexity). Composition is skewed to pro residues over residues alanine 87–arginine 159, proline 179–proline 193, and asparagine 201–glycine 212. Residues proline 225–glycine 291 are compositionally biased toward gly residues. The segment covering lysine 295 to lysine 304 has biased composition (basic residues). Residues isoleucine 416 to aspartate 588 form the tr-type G domain. Positions glycine 425–threonine 432 are G1. Residue glycine 425–threonine 432 coordinates GTP. The segment at glycine 450–histidine 454 is G2. Residues aspartate 475–glycine 478 are G3. GTP contacts are provided by residues aspartate 475–histidine 479 and asparagine 529–aspartate 532. Residues asparagine 529–aspartate 532 form a G4 region. Positions serine 565–lysine 567 are G5.

It belongs to the TRAFAC class translation factor GTPase superfamily. Classic translation factor GTPase family. IF-2 subfamily.

The protein localises to the cytoplasm. Its function is as follows. One of the essential components for the initiation of protein synthesis. Protects formylmethionyl-tRNA from spontaneous hydrolysis and promotes its binding to the 30S ribosomal subunits. Also involved in the hydrolysis of GTP during the formation of the 70S ribosomal complex. The polypeptide is Translation initiation factor IF-2 (Mycobacterium sp. (strain JLS)).